We begin with the raw amino-acid sequence, 202 residues long: LexA repressor (202 aa).

Catalysis depends on for autocatalytic cleavage activity residues S123 and K159.

It belongs to the peptidase S24 family. In terms of assembly, homodimer.

It catalyses the reaction Hydrolysis of Ala-|-Gly bond in repressor LexA.. In terms of biological role, binds the consensus sequence 5'-TGTTC-N(4)-GAACA-3'; some genes have a tandem consensus sequence, at high concentrations their binding is cooperative. Binds to the promoters of a number of genes, including dinB, imuA, lexA, recA, recQ, splB and uvrA. Represses a number of genes involved in the response to DNA damage (SOS response). In the presence of single-stranded DNA, RecA interacts with LexA causing an autocatalytic cleavage which disrupts the DNA-binding part of LexA, leading to derepression of the SOS regulon and eventually DNA repair. This Verrucomicrobium spinosum (strain ATCC 43997 / DSM 4136 / JCM 18804 / IFAM 1439) protein is LexA repressor.